The primary structure comprises 140 residues: Ribosome maturation factor RimP (140 aa).

It belongs to the RimP family.

Its subcellular location is the cytoplasm. Required for maturation of 30S ribosomal subunits. This chain is Ribosome maturation factor RimP, found in Campylobacter jejuni subsp. jejuni serotype O:6 (strain 81116 / NCTC 11828).